We begin with the raw amino-acid sequence, 105 residues long: Ferredoxin-2 (105 aa).

Positions 4–94 (YQVEVIYQGQ…DLKIETHKED (91 aa)) constitute a 2Fe-2S ferredoxin-type domain. 4 residues coordinate [2Fe-2S] cluster: Cys-40, Cys-45, Cys-48, and Cys-78.

Belongs to the 2Fe2S plant-type ferredoxin family. As to quaternary structure, forms a complex with heterodimeric ferredoxin-thioredoxin reductase (FTR) and thioredoxin. It depends on [2Fe-2S] cluster as a cofactor.

Functionally, ferredoxins are iron-sulfur proteins that transfer electrons in a wide variety of metabolic reactions. The sequence is that of Ferredoxin-2 (petF2) from Synechococcus sp. (strain ATCC 27144 / PCC 6301 / SAUG 1402/1) (Anacystis nidulans).